Here is a 578-residue protein sequence, read N- to C-terminus: Forkhead box protein P1 (578 aa).

The segment at 208–233 (GVCKWPGCETICEDFPSFLKHLNSEH) adopts a C2H2-type zinc-finger fold. The leucine-zipper stretch occupies residues 250–271 (VQQLELQLSKDKERLQAMMSHL). The segment at 284-288 (PLNLV) is ctbp1-binding. Residues 293–305 (LSKTASEASPQSL) show a composition bias toward polar residues. The disordered stretch occupies residues 293 to 325 (LSKTASEASPQSLPHTPTTPTAPLTPITQGPSV). Positions 306–320 (PHTPTTPTAPLTPIT) are enriched in low complexity. Residues 366–456 (RPPFTYASLI…PQKISGSPTL (91 aa)) constitute a DNA-binding region (fork-head). The tract at residues 511-578 (MEHTSSNGSD…EDDPVNDDME (68 aa)) is disordered. The segment covering 515-527 (SSNGSDSSPGRSP) has biased composition (low complexity). Acidic residues predominate over residues 568–578 (YEDDPVNDDME).

Dimerization is required for DNA-binding. Isoform a, but not isoform b, interacts with ctbp1. All isoforms show similar spatial expression. Localized to the animal hemisphere of early cleavage stage embryos. At tailbud stages, expressed in regions of the brain, eye and the splanchnic mesodermal layer of the lateral plate mesoderm surrounding the gut. At stage 35, expressed within the lens of the eye, in distinct regions of the head mesenchyme and in the area anterior to the gut. In the brain the anterior-most expression is restricted to the outer region of the mesencephalon. With ongoing development, additional expression is found in the curling gut.

The protein localises to the nucleus. In terms of biological role, transcriptional repressor. The protein is Forkhead box protein P1 of Xenopus laevis (African clawed frog).